We begin with the raw amino-acid sequence, 323 residues long: Lipoyl synthase (323 aa).

Residues 1–14 (MVTILDRTKPDDKR) show a composition bias toward basic and acidic residues. The interval 1–25 (MVTILDRTKPDDKRIRHPEKAHKPD) is disordered. Residues Cys-61, Cys-66, Cys-72, Cys-87, Cys-91, Cys-94, and Ser-300 each contribute to the [4Fe-4S] cluster site. A Radical SAM core domain is found at 73 to 289 (WEKKHATFMI…EDIAYTKGFL (217 aa)).

The protein belongs to the radical SAM superfamily. Lipoyl synthase family. [4Fe-4S] cluster serves as cofactor.

The protein localises to the cytoplasm. The catalysed reaction is [[Fe-S] cluster scaffold protein carrying a second [4Fe-4S](2+) cluster] + N(6)-octanoyl-L-lysyl-[protein] + 2 oxidized [2Fe-2S]-[ferredoxin] + 2 S-adenosyl-L-methionine + 4 H(+) = [[Fe-S] cluster scaffold protein] + N(6)-[(R)-dihydrolipoyl]-L-lysyl-[protein] + 4 Fe(3+) + 2 hydrogen sulfide + 2 5'-deoxyadenosine + 2 L-methionine + 2 reduced [2Fe-2S]-[ferredoxin]. Its pathway is protein modification; protein lipoylation via endogenous pathway; protein N(6)-(lipoyl)lysine from octanoyl-[acyl-carrier-protein]: step 2/2. Functionally, catalyzes the radical-mediated insertion of two sulfur atoms into the C-6 and C-8 positions of the octanoyl moiety bound to the lipoyl domains of lipoate-dependent enzymes, thereby converting the octanoylated domains into lipoylated derivatives. The protein is Lipoyl synthase of Allorhizobium ampelinum (strain ATCC BAA-846 / DSM 112012 / S4) (Agrobacterium vitis (strain S4)).